The primary structure comprises 473 residues: Photosystem II CP43 reaction center protein (473 aa).

A propeptide spanning residues 1-14 is cleaved from the precursor; sequence MKILYSQRRFYHVE. The next 5 helical transmembrane spans lie at 69-93, 134-155, 178-200, 255-275, and 291-312; these read LFEVAHFLPEKPLYEQGCILLPHLA, LIGPEILEESYPFFGYDWRDKN, KAMFFGGVYDTWAPGGGDVRYIN, KPFGWARRAFVWSGEAYLSYS, and WYNNTAYPSEFYGPTGPEASQA. [CaMn4O5] cluster is bound at residue Glu-367. A helical membrane pass occupies residues 447 to 471; that stretch reads RARAAAAGFEKGINRENEPVLSMKL.

The protein belongs to the PsbB/PsbC family. PsbC subfamily. PSII is composed of 1 copy each of membrane proteins PsbA, PsbB, PsbC, PsbD, PsbE, PsbF, PsbH, PsbI, PsbJ, PsbK, PsbL, PsbM, PsbT, PsbY, PsbZ, Psb30/Ycf12, at least 3 peripheral proteins of the oxygen-evolving complex and a large number of cofactors. It forms dimeric complexes. Binds multiple chlorophylls and provides some of the ligands for the Ca-4Mn-5O cluster of the oxygen-evolving complex. It may also provide a ligand for a Cl- that is required for oxygen evolution. PSII binds additional chlorophylls, carotenoids and specific lipids. is required as a cofactor.

It localises to the plastid. Its subcellular location is the chloroplast thylakoid membrane. Functionally, one of the components of the core complex of photosystem II (PSII). It binds chlorophyll and helps catalyze the primary light-induced photochemical processes of PSII. PSII is a light-driven water:plastoquinone oxidoreductase, using light energy to abstract electrons from H(2)O, generating O(2) and a proton gradient subsequently used for ATP formation. This Galdieria sulphuraria (Red alga) protein is Photosystem II CP43 reaction center protein.